Here is a 193-residue protein sequence, read N- to C-terminus: Secreted RxLR effector protein 126 (193 aa).

The N-terminal stretch at 1–20 (MRYLLAVLIAAAFVISSGTS) is a signal peptide. Positions 50 to 64 (RMLQTKAVNGLEEER) match the RxLR-dEER motif.

It belongs to the RxLR effector family.

It localises to the secreted. It is found in the host membrane. Its function is as follows. Secreted effector that completely suppresses the host cell death induced by cell death-inducing proteins. This is Secreted RxLR effector protein 126 from Plasmopara viticola (Downy mildew of grapevine).